The chain runs to 272 residues: B3 domain-containing protein Os10g0323000 (272 aa).

The TF-B3 1 DNA-binding region spans 39–132 (RYGENRKHGQ…TLDLLILDKH (94 aa)). The interval 139 to 171 (PPSKRDLKLKSKRSTHQDSKGHPSNTDPGPSRI) is disordered. The segment covering 141 to 159 (SKRDLKLKSKRSTHQDSKG) has biased composition (basic and acidic residues). The TF-B3 2 DNA-binding region spans 180–272 (ESSANTQLLV…THLGVIVDIF (93 aa)).

It is found in the nucleus. This is B3 domain-containing protein Os10g0323000 from Oryza sativa subsp. japonica (Rice).